Here is a 275-residue protein sequence, read N- to C-terminus: 3-methyl-2-oxobutanoate hydroxymethyltransferase (275 aa).

The Mg(2+) site is built by aspartate 44 and aspartate 83. 3-methyl-2-oxobutanoate contacts are provided by residues 44–45, aspartate 83, and lysine 113; that span reads DS. Glutamate 115 provides a ligand contact to Mg(2+). Glutamate 182 (proton acceptor) is an active-site residue.

The protein belongs to the PanB family. As to quaternary structure, homodecamer; pentamer of dimers. Mg(2+) serves as cofactor.

It is found in the cytoplasm. The catalysed reaction is 3-methyl-2-oxobutanoate + (6R)-5,10-methylene-5,6,7,8-tetrahydrofolate + H2O = 2-dehydropantoate + (6S)-5,6,7,8-tetrahydrofolate. Its pathway is cofactor biosynthesis; (R)-pantothenate biosynthesis; (R)-pantoate from 3-methyl-2-oxobutanoate: step 1/2. Catalyzes the reversible reaction in which hydroxymethyl group from 5,10-methylenetetrahydrofolate is transferred onto alpha-ketoisovalerate to form ketopantoate. This Clostridium botulinum (strain Alaska E43 / Type E3) protein is 3-methyl-2-oxobutanoate hydroxymethyltransferase.